Here is a 502-residue protein sequence, read N- to C-terminus: Zinc finger C3HC-type protein 1 (502 aa).

N-acetylalanine is present on alanine 2. A Phosphoserine modification is found at serine 24. Threonine 28 is subject to Phosphothreonine. The disordered stretch occupies residues 36-73 (IDEGIAPEEGGVDAKDTSATSQSVNGSPQAEQPSLEST). Polar residues predominate over residues 52–72 (TSATSQSVNGSPQAEQPSLES). Serine 58 and serine 62 each carry phosphoserine. Threonine 84 carries the phosphothreonine modification. The C3HC-type zinc finger occupies 102–156 (CAKYGWVTVECDMLKCSSCQAFLCASLQPAFDFDRYKQRCAELKKALCTAHEKFC). An F-box-like region spans residues 170-210 (LPLDEPAILVSEFLDRFQSLCHLDLQLPSLRPEDLKTMCLT). Residues 302-423 (SSPIPGLEGR…SSRSFFDPTS (122 aa)) are disordered. Phosphoserine occurs at positions 321 and 329. Polar residues predominate over residues 327–338 (TRSQDATFSPGS). Residue threonine 333 is modified to Phosphothreonine. 6 positions are modified to phosphoserine: serine 335, serine 338, serine 344, serine 354, serine 359, and serine 370. The span at 351-360 (RTRSWDSSSP) shows a compositional bias: polar residues. The segment covering 371–380 (PTTRTRPVTR) has biased composition (low complexity). At serine 381 the chain carries Phosphoserine. Phosphothreonine occurs at positions 384 and 387. Serine 395 bears the Phosphoserine mark. Positions 396-402 (PLRKAKR) match the Nuclear localization signal motif. Phosphoserine is present on residues serine 407 and serine 483. A compositionally biased stretch (low complexity) spans 407–422 (SSSSSDTSSRSFFDPT).

In terms of assembly, interacts with TPR; this interaction mediates ZC3HC1 nuclear envelopes (NE)-association but also required for proper positioning of a substantial amount of TPR at the nuclear basket (NB). Post-translationally, phosphorylated. May also be weakly phosphorylated on Tyr residues. As to expression, widely expressed. Highly expressed in heart, skeletal muscle and testis. Expressed in brain, placenta, lung, kidney, liver, pancreas, spleen, thymus, prostate, ovary small intestine and colon. Weakly or not expressed in leukocytes.

It is found in the nucleus. The protein resides in the nucleus envelope. Required for proper positioning of a substantial amount of TPR at the nuclear basket (NB) through interaction with TPR. This is Zinc finger C3HC-type protein 1 from Homo sapiens (Human).